The primary structure comprises 125 residues: Fluoride-specific ion channel FluC (125 aa).

4 helical membrane-spanning segments follow: residues 9–29, 32–52, 67–87, and 99–119; these read LFCA…YGLL, AFPY…GLIM, IGLT…SYET, and AFTN…LGII. Positions 75 and 78 each coordinate Na(+).

This sequence belongs to the fluoride channel Fluc/FEX (TC 1.A.43) family.

It localises to the cell inner membrane. It carries out the reaction fluoride(in) = fluoride(out). Its activity is regulated as follows. Na(+) is not transported, but it plays an essential structural role and its presence is essential for fluoride channel function. In terms of biological role, fluoride-specific ion channel. Important for reducing fluoride concentration in the cell, thus reducing its toxicity. The protein is Fluoride-specific ion channel FluC of Trichlorobacter lovleyi (strain ATCC BAA-1151 / DSM 17278 / SZ) (Geobacter lovleyi).